Here is a 334-residue protein sequence, read N- to C-terminus: N-acetyl-gamma-glutamyl-phosphate reductase (334 aa).

Cys-154 is a catalytic residue.

The protein belongs to the NAGSA dehydrogenase family. Type 1 subfamily.

It localises to the cytoplasm. The catalysed reaction is N-acetyl-L-glutamate 5-semialdehyde + phosphate + NADP(+) = N-acetyl-L-glutamyl 5-phosphate + NADPH + H(+). It functions in the pathway amino-acid biosynthesis; L-arginine biosynthesis; N(2)-acetyl-L-ornithine from L-glutamate: step 3/4. Functionally, catalyzes the NADPH-dependent reduction of N-acetyl-5-glutamyl phosphate to yield N-acetyl-L-glutamate 5-semialdehyde. This is N-acetyl-gamma-glutamyl-phosphate reductase from Salmonella typhimurium (strain LT2 / SGSC1412 / ATCC 700720).